Reading from the N-terminus, the 451-residue chain is uncharacterized protein (451 aa).

Residues 1 to 451 (MSETENKTTT…KKEAAKNKSK (451 aa)) are disordered. Over residues 9–22 (TTETPTTTDSTVTT) the composition is skewed to low complexity. Polar residues predominate over residues 44–54 (VKNQLSNTRTR). The segment covering 73–99 (KLIDTKERKEKKEKKEKEPKEPKEPKE) has biased composition (basic and acidic residues). Residues 114-147 (GDEEEDEEKEEDEEQKEEQSQEEDSEESEEEQNS) are compositionally biased toward acidic residues. The segment covering 152–162 (KKKKKQAKKVA) has biased composition (basic residues). 3 stretches are compositionally biased toward basic and acidic residues: residues 163–192 (KKET…EKEA), 199–210 (STEKKEKEEKPK), and 217–230 (KKDQ…KDGD). Over residues 232-244 (STTTTATATTTTD) the composition is skewed to low complexity. Composition is skewed to basic and acidic residues over residues 284-303 (TEEK…ETKK) and 311-340 (AAAE…DDKP). Positions 341-355 (AATTTTTTAAAATTT) are enriched in low complexity. Positions 356–383 (EEPKEKITKPAADKKKAPANKKAEKDQS) are enriched in basic and acidic residues. Low complexity predominate over residues 393-425 (TTTATTTTTNKDATAPTTTTNKDATAPTTTTTK). Basic and acidic residues predominate over residues 441-451 (PKKEAAKNKSK).

This is an uncharacterized protein from Dictyostelium discoideum (Social amoeba).